The chain runs to 539 residues: MPKLLRFDEEARRSLEKGVNKVADAVRITLGPKGRNVVIEKSWGSPTITNDGVSIAKEIELEDKFENLGAQLVKEVASKTNDVAGDGTTTATVLAQSMIREGLKNVAAGSNPILLKRGIDKATEKAAKYIKDKAKKLSGREDIAHVAAISANSSEIGDLIAEAMDKVGEDGVITVEDSKTLETYVEFTEGMQFDRGYISPYFVTDAEKMEVELKEPFILITDKKLSAVKPLIPVLEKVAQTGKPILVIAEDVEGEALTTLVLNKLKGTLSACAVKAPGFGDRRKAMLQDIAILTGGTVISDELGINLEDVAIEDLGRADIVRVKKDDTIIIGGKGNPEEIKKRIAQIKSQIEQTTSEYEKETLQERMAKLAGGVAVIKVGAATETELKEKKHRIEDALSATRAAVEEGIVPGGGVTLIRSRKAVEDVLKELDGDEKVGAMIVYKALEAPIRQIAENAGYDGAVIIEKILASKEESYGFDALKGEYTDMFKAGIIDPAKVTRSALQNAASIAGMLLTTEVLVVEKPEEKKEAAPAMPPEY.

Residues 29 to 32 (TLGP), 86 to 90 (DGTTT), glycine 413, 479 to 481 (DAL), and aspartate 495 each bind ATP.

Belongs to the chaperonin (HSP60) family. In terms of assembly, forms a cylinder of 14 subunits composed of two heptameric rings stacked back-to-back. Interacts with the co-chaperonin GroES.

It is found in the cytoplasm. It carries out the reaction ATP + H2O + a folded polypeptide = ADP + phosphate + an unfolded polypeptide.. Together with its co-chaperonin GroES, plays an essential role in assisting protein folding. The GroEL-GroES system forms a nano-cage that allows encapsulation of the non-native substrate proteins and provides a physical environment optimized to promote and accelerate protein folding. The polypeptide is Chaperonin GroEL (Pseudothermotoga lettingae (strain ATCC BAA-301 / DSM 14385 / NBRC 107922 / TMO) (Thermotoga lettingae)).